Here is a 134-residue protein sequence, read N- to C-terminus: Large ribosomal subunit protein eL32 (134 aa).

The protein belongs to the eukaryotic ribosomal protein eL32 family.

This is Large ribosomal subunit protein eL32 (RpL32) from Apis mellifera (Honeybee).